Reading from the N-terminus, the 466-residue chain is Ribulose bisphosphate carboxylase (466 aa).

Asn-111 is a substrate binding site. Lys-166 (proton acceptor) is an active-site residue. Lys-168 is a substrate binding site. Residues Lys-191, Asp-193, and Glu-194 each coordinate Mg(2+). Lys-191 is subject to N6-carboxylysine. Catalysis depends on His-287, which acts as the Proton acceptor. Positions 288, 321, and 368 each coordinate substrate.

This sequence belongs to the RuBisCO large chain family. Type II subfamily. In terms of assembly, homodimer. It depends on Mg(2+) as a cofactor.

It carries out the reaction 2 (2R)-3-phosphoglycerate + 2 H(+) = D-ribulose 1,5-bisphosphate + CO2 + H2O. It catalyses the reaction D-ribulose 1,5-bisphosphate + O2 = 2-phosphoglycolate + (2R)-3-phosphoglycerate + 2 H(+). RuBisCO catalyzes two reactions: the carboxylation of D-ribulose 1,5-bisphosphate, the primary event in carbon dioxide fixation, as well as the oxidative fragmentation of the pentose substrate. Both reactions occur simultaneously and in competition at the same active site. The protein is Ribulose bisphosphate carboxylase of Rhodospirillum rubrum (strain ATCC 11170 / ATH 1.1.1 / DSM 467 / LMG 4362 / NCIMB 8255 / S1).